Consider the following 1207-residue polypeptide: DNA-directed RNA polymerase subunit beta' (1207 aa).

Residues Cys60, Cys62, Cys75, and Cys78 each coordinate Zn(2+). 3 residues coordinate Mg(2+): Asp449, Asp451, and Asp453. The Zn(2+) site is built by Cys822, Cys896, Cys903, and Cys906.

It belongs to the RNA polymerase beta' chain family. The RNAP catalytic core consists of 2 alpha, 1 beta, 1 beta' and 1 omega subunit. When a sigma factor is associated with the core the holoenzyme is formed, which can initiate transcription. Requires Mg(2+) as cofactor. The cofactor is Zn(2+).

The enzyme catalyses RNA(n) + a ribonucleoside 5'-triphosphate = RNA(n+1) + diphosphate. DNA-dependent RNA polymerase catalyzes the transcription of DNA into RNA using the four ribonucleoside triphosphates as substrates. The sequence is that of DNA-directed RNA polymerase subunit beta' from Staphylococcus aureus (strain NCTC 8325 / PS 47).